We begin with the raw amino-acid sequence, 434 residues long: SPARC-related modular calcium-binding protein 1 (434 aa).

The N-terminal stretch at 1–26 (MLPARCARLLTPHLLLVLVQLSPARG) is a signal peptide. The region spanning 37 to 89 (SDRDPQCNLHCSRTQPKPICASDGRSYESMCEYQRAKCRDPTLGVVHRGRCKD) is the Kazal-like domain. 6 disulfide bridges follow: cysteine 43–cysteine 74, cysteine 47–cysteine 67, cysteine 56–cysteine 87, cysteine 95–cysteine 118, cysteine 129–cysteine 136, and cysteine 138–cysteine 158. Residues 92–158 (QSKCRLERAQ…SSVQNKTPVC (67 aa)) form the Thyroglobulin type-1 1 domain. The span at 149–172 (SSVQNKTPVCSGSVTDKPLSQGNS) shows a compositional bias: polar residues. The tract at residues 149-191 (SSVQNKTPVCSGSVTDKPLSQGNSGRKDDGSKPTPTMETQPVF) is disordered. A glycan (N-linked (GlcNAc...) asparagine) is linked at asparagine 214. One can recognise a Thyroglobulin type-1 2 domain in the interval 224-292 (VYSCDQERQS…TSTRYVMPSC (69 aa)). Disulfide bonds link cysteine 227-cysteine 251, cysteine 262-cysteine 269, and cysteine 271-cysteine 292. 2 EF-hand domains span residues 359–394 (LEER…VKKK) and 396–431 (KPKK…SKEG). Positions 372, 374, 376, 378, 383, 409, 411, 413, and 420 each coordinate Ca(2+). The N-linked (GlcNAc...) asparagine glycan is linked to asparagine 374.

Post-translationally, glycosylated. In terms of tissue distribution, widely expressed in many tissues with a strongest signal in ovary. No expression in spleen.

The protein localises to the secreted. It is found in the extracellular space. It localises to the extracellular matrix. The protein resides in the basement membrane. Its function is as follows. Plays essential roles in both eye and limb development. Probable regulator of osteoblast differentiation. The protein is SPARC-related modular calcium-binding protein 1 (SMOC1) of Homo sapiens (Human).